The chain runs to 698 residues: Protein arginine N-methyltransferase 7 (698 aa).

SAM-dependent MTase PRMT-type domains follow at residues 14-357 and 366-698; these read QNTW…YSLW and EKPA…EKSE.

The protein belongs to the class I-like SAM-binding methyltransferase superfamily. Protein arginine N-methyltransferase family. PRMT7 subfamily.

In terms of biological role, essential arginine methyltransferase that can both catalyze the formation of omega-N monomethylarginine (MMA) and symmetrical dimethylarginine (sDMA). Specifically mediates the symmetrical dimethylation of arginine residues in the small nuclear ribonucleoproteins SmD1 and SmD3. The sequence is that of Protein arginine N-methyltransferase 7 (Art7) from Drosophila mojavensis (Fruit fly).